The primary structure comprises 62 residues: Protein A37.5 homolog (62 aa).

This sequence belongs to the orthopoxviruses A37.5 protein family.

The polypeptide is Protein A37.5 homolog (A40_5R) (Homo sapiens (Human)).